Reading from the N-terminus, the 165-residue chain is V-type proton ATPase 16 kDa proteolipid subunit (165 aa).

Over 1-10 the chain is Lumenal; sequence MSSVFSGDET. Residues 11-33 form a helical membrane-spanning segment; the sequence is APFFGFLGAASALIFSCMGAAYG. Topologically, residues 34–55 are cytoplasmic; sequence TAKSGVGVASMGVMRPELVMKS. A helical membrane pass occupies residues 56 to 76; that stretch reads IVPVVMAGVLGIYGLIIAVII. Topologically, residues 77 to 95 are lumenal; it reads STGINPKAKPYYLFDGYAH. The helical transmembrane segment at 96 to 117 threads the bilayer; that stretch reads LSSGLACGLAGLAAGMAIGIVG. At 118–129 the chain is on the cytoplasmic side; the sequence is DAGVRANAQQPK. A helical membrane pass occupies residues 130–155; it reads LFVGMILILIFAEALALYGLIVGIIL. Residues 156–165 are Lumenal-facing; that stretch reads SSRAGQSRAD.

Belongs to the V-ATPase proteolipid subunit family. As to quaternary structure, V-ATPase is a heteromultimeric enzyme composed of a peripheral catalytic V1 complex (main components: subunits A, B, C, D, E, and F) attached to an integral membrane V0 proton pore complex (main component: the proteolipid protein; which is present as a hexamer that forms the proton-conducting pore).

The protein localises to the vacuole membrane. Functionally, proton-conducting pore forming subunit of the membrane integral V0 complex of vacuolar ATPase. V-ATPase is responsible for acidifying a variety of intracellular compartments in eukaryotic cells. This chain is V-type proton ATPase 16 kDa proteolipid subunit (VATP-P1), found in Oryza sativa subsp. indica (Rice).